A 307-amino-acid polypeptide reads, in one-letter code: Aquaporin Lacbi1:387054 (307 aa).

The Cytoplasmic segment spans residues 1-40 (MSNAPLVHLSDLQKRLRVFAVWEKVRNDGKVHWAIECFAE). Residues 41-61 (MFGVFLYVYFGLGSTAGWVIG) traverse the membrane as a helical segment. Residues 62-68 (NIIKETN) lie on the Extracellular side of the membrane. The chain crosses the membrane as a helical span at residues 69-89 (LSSILQIGLAYAFGIWFAIGL). At 90–120 (CSSSSGGHFNPCVTLSFVVFKGFPKLKACRY) the chain is on the cytoplasmic side. The NPA 1 signature appears at 99 to 101 (NPC). The helical transmembrane segment at 121 to 141 (IIAQILGAYIASALVYSQWNV) threads the bilayer. The Extracellular portion of the chain corresponds to 142 to 157 (LIEECTLGLIKAKAYD). Residues 158–178 (TTMFTPNGPAGIFALYLVPGA) traverse the membrane as a helical segment. The NPA 2 signature appears at 167 to 169 (AGI). Over 179–183 (QSVPR) the chain is Cytoplasmic. Residues 184–203 (ALLNEFVNSTLIGMIIWAAL) traverse the membrane as a helical segment. The Extracellular segment spans residues 204-216 (DPTNMMVPPAMGP). A helical membrane pass occupies residues 217 to 237 (LFISLAYAAVIWGFATPAVAL). Over 238 to 264 (NTARDLGARLFAMSIWGTKAAGSGYSA) the chain is Cytoplasmic. A helical transmembrane segment spans residues 265-285 (IACLINIPATLLGVFLYEVFF). Topologically, residues 286 to 307 (TDSDRGKLLPILNGKKLKHIFS) are extracellular.

It belongs to the MIP/aquaporin (TC 1.A.8) family.

The protein localises to the membrane. It catalyses the reaction H2O(in) = H2O(out). The enzyme catalyses NH4(+)(in) = NH4(+)(out). It carries out the reaction urea(in) = urea(out). The catalysed reaction is glycerol(in) = glycerol(out). In terms of biological role, water channel required to facilitate the transport of water across membranes. In addition to water, also shows strong ammonium transport activity. Also enables low but statistically significant glycerol and urea permeability. May be involved in fungal nitrogen (ammonium) support of the plant host in symbiosis. In Laccaria bicolor (strain S238N-H82 / ATCC MYA-4686) (Bicoloured deceiver), this protein is Aquaporin Lacbi1:387054.